The sequence spans 199 residues: FMN-dependent NADH:quinone oxidoreductase (199 aa).

Residues 17–19 and 87–90 each bind FMN; these read SNS and MYNF.

The protein belongs to the azoreductase type 1 family. Homodimer. The cofactor is FMN.

It carries out the reaction 2 a quinone + NADH + H(+) = 2 a 1,4-benzosemiquinone + NAD(+). The catalysed reaction is N,N-dimethyl-1,4-phenylenediamine + anthranilate + 2 NAD(+) = 2-(4-dimethylaminophenyl)diazenylbenzoate + 2 NADH + 2 H(+). Quinone reductase that provides resistance to thiol-specific stress caused by electrophilic quinones. Its function is as follows. Also exhibits azoreductase activity. Catalyzes the reductive cleavage of the azo bond in aromatic azo compounds to the corresponding amines. The polypeptide is FMN-dependent NADH:quinone oxidoreductase (Mycoplasma mycoides subsp. mycoides SC (strain CCUG 32753 / NCTC 10114 / PG1)).